A 337-amino-acid chain; its full sequence is 1-aminocyclopropane-1-carboxylate deaminase (337 aa).

Position 50 is an N6-(pyridoxal phosphate)lysine (Lys50). Ser77 (nucleophile) is an active-site residue.

This sequence belongs to the ACC deaminase/D-cysteine desulfhydrase family. As to quaternary structure, homotrimer. The cofactor is pyridoxal 5'-phosphate.

It carries out the reaction 1-aminocyclopropane-1-carboxylate + H2O = 2-oxobutanoate + NH4(+). Functionally, catalyzes a cyclopropane ring-opening reaction, the irreversible conversion of 1-aminocyclopropane-1-carboxylate (ACC) to ammonia and alpha-ketobutyrate. Allows growth on ACC as a nitrogen source. In Bradyrhizobium diazoefficiens (strain JCM 10833 / BCRC 13528 / IAM 13628 / NBRC 14792 / USDA 110), this protein is 1-aminocyclopropane-1-carboxylate deaminase.